The chain runs to 202 residues: LexA repressor 2 (202 aa).

The segment at residues 28 to 48 (LADIATRFGFASRSVARKHIT) is a DNA-binding region (H-T-H motif). Catalysis depends on for autocatalytic cleavage activity residues Ser-123 and Lys-160.

Belongs to the peptidase S24 family. Homodimer.

It catalyses the reaction Hydrolysis of Ala-|-Gly bond in repressor LexA.. Its function is as follows. Represses a number of genes involved in the response to DNA damage (SOS response), including recA and lexA. In the presence of single-stranded DNA, RecA interacts with LexA causing an autocatalytic cleavage which disrupts the DNA-binding part of LexA, leading to derepression of the SOS regulon and eventually DNA repair. This Pseudomonas putida (strain ATCC 47054 / DSM 6125 / CFBP 8728 / NCIMB 11950 / KT2440) protein is LexA repressor 2.